The primary structure comprises 321 residues: GTP 3',8-cyclase (321 aa).

Residues 5–233 (SFNRVIDYIR…QGSSKIYTLE (229 aa)) enclose the Radical SAM core domain. Arginine 14 serves as a coordination point for GTP. Cysteine 21 and cysteine 25 together coordinate [4Fe-4S] cluster. Tyrosine 27 lines the S-adenosyl-L-methionine pocket. Cysteine 28 lines the [4Fe-4S] cluster pocket. Residue arginine 64 coordinates GTP. Glycine 68 is a binding site for S-adenosyl-L-methionine. Serine 95 contributes to the GTP binding site. Serine 119 contacts S-adenosyl-L-methionine. Lysine 155 is a GTP binding site. Methionine 189 is a binding site for S-adenosyl-L-methionine. Cysteine 249 and cysteine 252 together coordinate [4Fe-4S] cluster. 254-256 (RIR) is a binding site for GTP. Position 266 (cysteine 266) interacts with [4Fe-4S] cluster.

This sequence belongs to the radical SAM superfamily. MoaA family. As to quaternary structure, monomer and homodimer. [4Fe-4S] cluster is required as a cofactor.

It catalyses the reaction GTP + AH2 + S-adenosyl-L-methionine = (8S)-3',8-cyclo-7,8-dihydroguanosine 5'-triphosphate + 5'-deoxyadenosine + L-methionine + A + H(+). The protein operates within cofactor biosynthesis; molybdopterin biosynthesis. Catalyzes the cyclization of GTP to (8S)-3',8-cyclo-7,8-dihydroguanosine 5'-triphosphate. This Helicobacter pylori (strain HPAG1) protein is GTP 3',8-cyclase.